A 507-amino-acid polypeptide reads, in one-letter code: Capsid vertex component 1 (507 aa).

Residues 219-257 (AAAETSVSKHHPALENPSNIRGSAGGEGGGGRAGTGGTV) are disordered. Over residues 241–257 (SAGGEGGGGRAGTGGTV) the composition is skewed to gly residues.

The protein belongs to the herpesviridae CVC1 protein family. As to quaternary structure, interacts (via C-terminus) with capsid vertex component 2/CVC2.

The protein localises to the virion. It localises to the host nucleus. Functionally, capsid vertex-specific component that plays a role during viral DNA encapsidation, assuring correct genome cleavage and presumably stabilizing capsids that contain full-length viral genomes. In Epstein-Barr virus (strain B95-8) (HHV-4), this protein is Capsid vertex component 1.